A 1007-amino-acid polypeptide reads, in one-letter code: A disintegrin and metalloproteinase with thrombospondin motifs 1 (1007 aa).

The signal sequence occupies residues 1–20 (MPCCLWAALSLLLAVVGAGA). N-linked (GlcNAc...) asparagine glycosylation is found at Asn130 and Asn228. In terms of domain architecture, Peptidase M12B spans 184–370 (LWLELAIVAD…WSSCSKEQFH (187 aa)). Residue His322 participates in Zn(2+) binding. Positions 322 to 333 (HELAHLLGLTHD) match the Metal-binding motif. Glu323 is an active-site residue. The Zn(2+) site is built by His326 and His332. Intrachain disulfides connect Cys338-Cys364, Cys494-Cys530, Cys498-Cys536, and Cys509-Cys520. Positions 482-537 (TPEWGDWEEWSACNADCGYGLRTRTRKCKYRGFVSESACEGAGSQVATCWAGSSCA) constitute a TSP type-1 1 domain. N-linked (GlcNAc...) asparagine glycosylation is found at Asn561, Asn610, Asn626, Asn737, Asn777, and Asn865. TSP type-1 domains lie at 833-899 (CEFV…NRIP) and 900-952 (CPVY…RRCP). 3 cysteine pairs are disulfide-bonded: Cys912-Cys946, Cys916-Cys951, and Cys927-Cys935.

Zn(2+) is required as a cofactor.

It localises to the secreted. The protein localises to the extracellular space. It is found in the extracellular matrix. Involved in larval molting and metamorphosis. May degrade extracellular matrix (ECM) and basement membrane (BM) during the development of organs to allow degeneration and remodeling of tissues. This Bombyx mori (Silk moth) protein is A disintegrin and metalloproteinase with thrombospondin motifs 1.